We begin with the raw amino-acid sequence, 1600 residues long: E3 ubiquitin-protein ligase listerin (1600 aa).

11 HEAT repeats span residues 31 to 65 (SSVP…CVKK), 114 to 150 (KTLP…DSDQ), 161 to 202 (GKLL…SSMA), 245 to 288 (YQLV…DLLR), 291 to 344 (ISVT…PDYA), 526 to 606 (RNYK…AALS), 853 to 904 (YTTN…DIRT), 962 to 986 (YASK…GAKF), 1045 to 1083 (LYNV…WVQT), 1289 to 1324 (VDVR…KADN), and 1325 to 1369 (SLNA…EEGT). The RING-type; degenerate zinc finger occupies 1537–1583 (CPICYAVVSADKKLPDKRCSTCNNLFHRLCLYKWFQNSNKNTCPLCR).

It belongs to the LTN1 family. Component of the ribosome quality control complex (RQC), composed of the E3 ubiquitin ligase RKR1/LTN1, RQC1 and RQC2, as well as CDC48 and its ubiquitin-binding cofactors associated with the 60S ribosomal subunits.

Its subcellular location is the nucleus. The protein resides in the cytoplasm. It localises to the cytosol. It catalyses the reaction S-ubiquitinyl-[E2 ubiquitin-conjugating enzyme]-L-cysteine + [acceptor protein]-L-lysine = [E2 ubiquitin-conjugating enzyme]-L-cysteine + N(6)-ubiquitinyl-[acceptor protein]-L-lysine.. Its pathway is protein modification; protein ubiquitination. Its function is as follows. E3 ubiquitin-protein ligase component of the ribosome quality control complex (RQC), a ribosome-associated complex that mediates ubiquitination and extraction of incompletely synthesized nascent chains for proteasomal degradation. Mediates ubiquitination of proteins derived from mRNAs lacking stop codons (non-stop proteins) and other translation arrest products induced by poly-lysine sequences and tandem rare codons. Ubiquitination leads to CDC48 recruitment for extraction and degradation of the incomplete translation product. May indirectly play a role in chromatin function and transcription. In Neurospora crassa (strain ATCC 24698 / 74-OR23-1A / CBS 708.71 / DSM 1257 / FGSC 987), this protein is E3 ubiquitin-protein ligase listerin (rkr-1).